The sequence spans 385 residues: Linearmycin resistance permease protein LnrN (385 aa).

Helical transmembrane passes span 22–42, 198–218, 239–259, 274–294, 305–325, and 360–380; these read YLIM…MLSG, AAGF…GTIL, IGAG…GILL, AAVI…GLMI, LAFG…YWPI, and DILG…AAGL. The ABC transmembrane type-2 domain occupies 163-382; sequence KTVFAKKHED…AITFAAGLKA (220 aa).

This sequence belongs to the ABC-2 integral membrane protein family. The complex is composed of two ATP-binding proteins (LnrL) and two transmembrane proteins (LnrM and LnrN).

The protein localises to the cell membrane. Functionally, required for resistance to linearmycins, a family of antibiotic-specialized metabolites produced by some streptomycetes. Part of the ABC transporter complex LnrLMN that probably facilitates linearmycin removal from the membrane. Responsible for the translocation of the substrate across the membrane. Also mediates KinC-dependent biofilm morphology. The protein is Linearmycin resistance permease protein LnrN of Bacillus subtilis (strain 168).